A 1679-amino-acid polypeptide reads, in one-letter code: GRIP and coiled-coil domain-containing protein 2 (1679 aa).

Position 1 is an N-acetylmethionine (methionine 1). Disordered regions lie at residues 1 to 23 (MEDS…KLET) and 1466 to 1522 (LKSE…SAGT). The stretch at 35–1469 (KQMMLLQKAK…ETQLFQLKSE (1435 aa)) forms a coiled coil. Phosphoserine is present on residues serine 1474 and serine 1478. Residues 1474–1483 (SPASSHQPSK) are compositionally biased toward polar residues. The tract at residues 1569–1608 (HLNGLLRETEATNAILMEQIKLLKSEIRRLERNQEREKSV) is mediates interaction with RAB6A. A mediates interaction with RAB9A region spans residues 1569-1679 (HLNGLLRETE…SYLHSWSGLR (111 aa)). In terms of domain architecture, GRIP spans 1604 to 1654 (REKSVANLEYLKNVLLRFIFLKPGSERERLLPVIDTMLQLSPEEKGKLATV).

Homodimer. Interacts (via GRIP domain) with RAB6A (preferentially in its GTP-bound form). May interact (RAB6A-dependent) with ARL1; might be involved in GCC2 Golgi localization. Interacts with CLASP1 and CLASP2; recruits both proteins to membranes of the TGN. Interacts with STX16. Interacts (probably via GRIP domain) with RAB9A (preferentially in its GTP-bound form).

Its subcellular location is the cytoplasm. It localises to the golgi apparatus. It is found in the trans-Golgi network membrane. Golgin which probably tethers transport vesicles to the trans-Golgi network (TGN) and regulates vesicular transport between the endosomes and the Golgi. As a RAB9A effector it is involved in recycling of the mannose 6-phosphate receptor from the late endosomes to the TGN. May also play a role in transport between the recycling endosomes and the Golgi. Required for maintenance of the Golgi structure, it is involved in the biogenesis of noncentrosomal, Golgi-associated microtubules through recruitment of CLASP1 and CLASP2. The sequence is that of GRIP and coiled-coil domain-containing protein 2 (Gcc2) from Rattus norvegicus (Rat).